The following is a 396-amino-acid chain: Pre-mycofactocin synthase (396 aa).

Residues 1–383 (MAEAWFETVA…SPADILVPTG (383 aa)) form the FMN hydroxy acid dehydrogenase domain. Residues serine 108, glutamine 128, threonine 156, and lysine 254 each coordinate FMN. The active-site Proton acceptor is the histidine 278. FMN contacts are provided by residues 309 to 313 (DGGIR) and 332 to 333 (GR).

The protein belongs to the FMN-dependent alpha-hydroxy acid dehydrogenase family. Requires FMN as cofactor.

The catalysed reaction is 3-amino-5-[(4-hydroxyphenyl)methyl]-4,4-dimethyl-2-pyrrolidin-2-one + O2 + H2O = pre-mycofactocin + H2O2 + NH4(+). Its function is as follows. Involved in the biosynthesis of the enzyme cofactor mycofactocin (MFT). Catalyzes the oxidative deamination of AHDP (3-amino-5-[(4-hydroxyphenyl)methyl]-4,4-dimethyl-2-pyrrolidin-2-one), forming an alpha-keto amide moiety on the resulting molecule, which is called pre-mycofactocin (PMFT). This reaction occurs via a 5-[(4-hydroxyphenyl)methyl]-3-imino-4,4-dimethylpyrrolidin-2-one intermediate, which converts to PMFT. The alpha-keto amide moiety is the redox-active center for the redox activity of mycofactocin. The chain is Pre-mycofactocin synthase (mftD) from Mycobacterium tuberculosis (strain CDC 1551 / Oshkosh).